The following is a 212-amino-acid chain: Large ribosomal subunit protein uL3 (212 aa).

An N5-methylglutamine modification is found at Q153.

It belongs to the universal ribosomal protein uL3 family. Part of the 50S ribosomal subunit. Forms a cluster with proteins L14 and L19. Post-translationally, methylated by PrmB.

Its function is as follows. One of the primary rRNA binding proteins, it binds directly near the 3'-end of the 23S rRNA, where it nucleates assembly of the 50S subunit. The polypeptide is Large ribosomal subunit protein uL3 (Shewanella piezotolerans (strain WP3 / JCM 13877)).